A 258-amino-acid chain; its full sequence is Gamma carbonic anhydrase 3, mitochondrial (258 aa).

A mitochondrion-targeting transit peptide spans 1-43; that stretch reads MGTMGKAFYSVGFWIRETGQALDRLGCRLQGKNHFREQLSRHR. Substrate contacts are provided by residues 86–88 and 101–102; these read RGD and QD. Residues His-107, His-130, and His-135 each contribute to the Zn(2+) site. A substrate-binding site is contributed by Asn-209.

Belongs to the gamma-class carbonic anhydrase family. As to quaternary structure, homotrimer. Component of the oxidoreductase respiratory chain complex I; element of the extra matrix-exposed domain, which is attached to the membrane arm of this complex. Zn(2+) is required as a cofactor.

It localises to the mitochondrion membrane. Its function is as follows. Enzyme involved in the catabolism of H(2)CO(3) but that does not mediates the reversible hydration of carbon dioxide. Mediates complex I assembly in mitochondria and respiration. The polypeptide is Gamma carbonic anhydrase 3, mitochondrial (GAMMACA3) (Arabidopsis thaliana (Mouse-ear cress)).